A 332-amino-acid chain; its full sequence is Phosphatidylglycerol--prolipoprotein diacylglyceryl transferase (332 aa).

3 helical membrane passes run 18–38 (FPYF…AYIL), 66–86 (FFTW…TMVY), and 111–131 (VGLR…GGGL). Arginine 159 contributes to the a 1,2-diacyl-sn-glycero-3-phospho-(1'-sn-glycerol) binding site. Transmembrane regions (helical) follow at residues 249-269 (GFLV…IEYF) and 302-322 (ILCV…SAYH).

Belongs to the Lgt family.

It localises to the cell inner membrane. It catalyses the reaction L-cysteinyl-[prolipoprotein] + a 1,2-diacyl-sn-glycero-3-phospho-(1'-sn-glycerol) = an S-1,2-diacyl-sn-glyceryl-L-cysteinyl-[prolipoprotein] + sn-glycerol 1-phosphate + H(+). The protein operates within protein modification; lipoprotein biosynthesis (diacylglyceryl transfer). In terms of biological role, catalyzes the transfer of the diacylglyceryl group from phosphatidylglycerol to the sulfhydryl group of the N-terminal cysteine of a prolipoprotein, the first step in the formation of mature lipoproteins. This is Phosphatidylglycerol--prolipoprotein diacylglyceryl transferase from Treponema pallidum (strain Nichols).